We begin with the raw amino-acid sequence, 681 residues long: Methionine--tRNA ligase (681 aa).

The 'HIGH' region signature appears at 18–28 (PYANGSIHLGH). Zn(2+)-binding residues include Cys149, Cys152, Cys162, and Cys165. A 'KMSKS' region motif is present at residues 334-338 (KMSKS). An ATP-binding site is contributed by Lys337. Residues 580-681 (DFAKLDLRIV…NGAEPGQRVS (102 aa)) enclose the tRNA-binding domain.

The protein belongs to the class-I aminoacyl-tRNA synthetase family. MetG type 1 subfamily. Homodimer. It depends on Zn(2+) as a cofactor.

The protein localises to the cytoplasm. The catalysed reaction is tRNA(Met) + L-methionine + ATP = L-methionyl-tRNA(Met) + AMP + diphosphate. In terms of biological role, is required not only for elongation of protein synthesis but also for the initiation of all mRNA translation through initiator tRNA(fMet) aminoacylation. This is Methionine--tRNA ligase from Chromohalobacter salexigens (strain ATCC BAA-138 / DSM 3043 / CIP 106854 / NCIMB 13768 / 1H11).